Consider the following 286-residue polypeptide: ATP synthase gamma chain (286 aa).

It belongs to the ATPase gamma chain family. F-type ATPases have 2 components, CF(1) - the catalytic core - and CF(0) - the membrane proton channel. CF(1) has five subunits: alpha(3), beta(3), gamma(1), delta(1), epsilon(1). CF(0) has three main subunits: a, b and c.

The protein localises to the cell inner membrane. Its function is as follows. Produces ATP from ADP in the presence of a proton gradient across the membrane. The gamma chain is believed to be important in regulating ATPase activity and the flow of protons through the CF(0) complex. The sequence is that of ATP synthase gamma chain from Pseudomonas syringae pv. tomato (strain ATCC BAA-871 / DC3000).